A 577-amino-acid chain; its full sequence is Arginine--tRNA ligase (577 aa).

The 'HIGH' region motif lies at 122 to 132 (PNVAKEMHVGH).

This sequence belongs to the class-I aminoacyl-tRNA synthetase family. Monomer.

It localises to the cytoplasm. It carries out the reaction tRNA(Arg) + L-arginine + ATP = L-arginyl-tRNA(Arg) + AMP + diphosphate. This chain is Arginine--tRNA ligase, found in Aliivibrio fischeri (strain ATCC 700601 / ES114) (Vibrio fischeri).